The sequence spans 264 residues: Thymidylate synthase (264 aa).

R21 serves as a coordination point for dUMP. Residue H51 participates in (6R)-5,10-methylene-5,6,7,8-tetrahydrofolate binding. Residue 126 to 127 (RR) coordinates dUMP. The active-site Nucleophile is the C146. DUMP is bound by residues 166-169 (RSCD), N177, and 207-209 (HLY). D169 is a (6R)-5,10-methylene-5,6,7,8-tetrahydrofolate binding site. Residue A263 participates in (6R)-5,10-methylene-5,6,7,8-tetrahydrofolate binding.

It belongs to the thymidylate synthase family. Bacterial-type ThyA subfamily. As to quaternary structure, homodimer.

The protein localises to the cytoplasm. The catalysed reaction is dUMP + (6R)-5,10-methylene-5,6,7,8-tetrahydrofolate = 7,8-dihydrofolate + dTMP. The protein operates within pyrimidine metabolism; dTTP biosynthesis. Catalyzes the reductive methylation of 2'-deoxyuridine-5'-monophosphate (dUMP) to 2'-deoxythymidine-5'-monophosphate (dTMP) while utilizing 5,10-methylenetetrahydrofolate (mTHF) as the methyl donor and reductant in the reaction, yielding dihydrofolate (DHF) as a by-product. This enzymatic reaction provides an intracellular de novo source of dTMP, an essential precursor for DNA biosynthesis. The sequence is that of Thymidylate synthase from Salmonella typhi.